The primary structure comprises 192 residues: Nucleoside triphosphate pyrophosphatase (192 aa).

Aspartate 73 serves as the catalytic Proton acceptor.

Belongs to the Maf family. It depends on a divalent metal cation as a cofactor.

It localises to the cytoplasm. It catalyses the reaction a ribonucleoside 5'-triphosphate + H2O = a ribonucleoside 5'-phosphate + diphosphate + H(+). It carries out the reaction a 2'-deoxyribonucleoside 5'-triphosphate + H2O = a 2'-deoxyribonucleoside 5'-phosphate + diphosphate + H(+). Its function is as follows. Nucleoside triphosphate pyrophosphatase. May have a dual role in cell division arrest and in preventing the incorporation of modified nucleotides into cellular nucleic acids. This Ehrlichia canis (strain Jake) protein is Nucleoside triphosphate pyrophosphatase.